A 337-amino-acid chain; its full sequence is Phosphoenolpyruvate transferase (337 aa).

D69 contacts 7,8-didemethyl-8-hydroxy-5-deazariboflavin.

This sequence belongs to the CofD family. Homodimer. Requires Mg(2+) as cofactor.

It carries out the reaction enolpyruvoyl-2-diphospho-5'-guanosine + 7,8-didemethyl-8-hydroxy-5-deazariboflavin = dehydro coenzyme F420-0 + GMP + H(+). The protein operates within cofactor biosynthesis; coenzyme F420 biosynthesis. Its function is as follows. Catalyzes the transfer of the phosphoenolpyruvate moiety from enoylpyruvoyl-2-diphospho-5'-guanosine (EPPG) to 7,8-didemethyl-8-hydroxy-5-deazariboflavin (FO) with the formation of dehydro coenzyme F420-0 and GMP. The protein is Phosphoenolpyruvate transferase of Mycobacterium avium (strain 104).